The chain runs to 344 residues: Lysophosphatidic acid receptor 6 (344 aa).

The Extracellular portion of the chain corresponds to 1–19 (MVSVNSSHCFYNDSFKYTL). A glycan (N-linked (GlcNAc...) asparagine) is linked at Asn-5. Residues 20 to 46 (YGCMFSMVFVLGLISNCVAIYIFICVL) traverse the membrane as a helical segment. The Cytoplasmic segment spans residues 47 to 55 (KVRNETTTY). The helical transmembrane segment at 56–79 (MINLAMSDLLFVFTLPFRIFYFTT) threads the bilayer. The Extracellular segment spans residues 80-92 (RNWPFGDLLCKIS). A disulfide bridge connects residues Cys-89 and Cys-168. Residues 93–112 (VMLFYTNMYGSILFLTCISV) form a helical membrane-spanning segment. Residues 113-133 (DRFLAIVYPFKSKTLRTKRNA) are Cytoplasmic-facing. A helical membrane pass occupies residues 134–154 (KIVCTGVWLTVIGGSAPAVFV). The Extracellular segment spans residues 155–181 (QSTHSQGNNASEACFENFPEATWKTYL). A helical transmembrane segment spans residues 182-209 (SRIVIFIEIVGFFIPLILNVTCSSMVLK). The Cytoplasmic portion of the chain corresponds to 210 to 227 (TLTKPVTLSRSKINKTKV). The helical transmembrane segment at 228–253 (LKMIFVHLIIFCFCFVPYNINLILYS) threads the bilayer. Topologically, residues 254–272 (LVRTQTFVNCSVVAAVRTM) are extracellular. A helical transmembrane segment spans residues 273-292 (YPITLCIAVSNCCFDPIVYY). A lipid anchor (S-palmitoyl cysteine) is attached at Cys-284. The Cytoplasmic portion of the chain corresponds to 293–344 (FTSDTIQNSIKMKNWSVRRSDFRFSEVHGAENFIQHNLQTLKSKIFDNESAA).

Belongs to the G-protein coupled receptor 1 family. Expressed ubiquitously, including in skin and hair follicle cells. Detected in both Henle's and Huxley's layers of the inner root sheath of the hair follicle and in suprabasal layers of the epidermis (at protein level). Expressed at low levels in peripheral blood leukocytes.

It localises to the cell membrane. Its function is as follows. Binds to oleoyl-L-alpha-lysophosphatidic acid (LPA). Intracellular cAMP is involved in the receptor activation. Important for the maintenance of hair growth and texture. The protein is Lysophosphatidic acid receptor 6 (LPAR6) of Homo sapiens (Human).